Reading from the N-terminus, the 287-residue chain is Small ribosomal subunit protein uS10m (287 aa).

A mitochondrion-targeting transit peptide spans M1 to L33. Residues L33–L43 are compositionally biased toward polar residues. Residues L33 to V84 form a disordered region. The segment covering P63–T73 has biased composition (basic and acidic residues). Over residues K74–V84 the composition is skewed to polar residues.

Belongs to the universal ribosomal protein uS10 family. In terms of assembly, part of the mitochondrial small ribosomal subunit.

It localises to the mitochondrion. Functionally, involved in mitochondrial genome encoded proteins translation. Involved in the binding of tRNA to the ribosomes. The sequence is that of Small ribosomal subunit protein uS10m (rsm10) from Emericella nidulans (strain FGSC A4 / ATCC 38163 / CBS 112.46 / NRRL 194 / M139) (Aspergillus nidulans).